The following is a 75-amino-acid chain: Cytochrome c oxidase subunit 6C (75 aa).

Residues 1-13 are Mitochondrial matrix-facing; sequence MASEVLAKPQMRG. Residues 14 to 54 form a helical membrane-spanning segment; that stretch reads LLARRLRIHMVGAFLISLGVAALYKFGVAEPRKKAYADFYK. Residues 55–75 are Mitochondrial intermembrane-facing; the sequence is NYSPEKDFEEMKKAGVFRSIK.

Belongs to the cytochrome c oxidase subunit 6c family. In terms of assembly, component of the cytochrome c oxidase (complex IV, CIV), a multisubunit enzyme composed of 14 subunits. The complex is composed of a catalytic core of 3 subunits MT-CO1, MT-CO2 and MT-CO3, encoded in the mitochondrial DNA, and 11 supernumerary subunits COX4I, COX5A, COX5B, COX6A, COX6B, COX6C, COX7A, COX7B, COX7C, COX8 and NDUFA4, which are encoded in the nuclear genome. The complex exists as a monomer or a dimer and forms supercomplexes (SCs) in the inner mitochondrial membrane with NADH-ubiquinone oxidoreductase (complex I, CI) and ubiquinol-cytochrome c oxidoreductase (cytochrome b-c1 complex, complex III, CIII), resulting in different assemblies (supercomplex SCI(1)III(2)IV(1) and megacomplex MCI(2)III(2)IV(2)).

Its subcellular location is the mitochondrion inner membrane. It functions in the pathway energy metabolism; oxidative phosphorylation. Component of the cytochrome c oxidase, the last enzyme in the mitochondrial electron transport chain which drives oxidative phosphorylation. The respiratory chain contains 3 multisubunit complexes succinate dehydrogenase (complex II, CII), ubiquinol-cytochrome c oxidoreductase (cytochrome b-c1 complex, complex III, CIII) and cytochrome c oxidase (complex IV, CIV), that cooperate to transfer electrons derived from NADH and succinate to molecular oxygen, creating an electrochemical gradient over the inner membrane that drives transmembrane transport and the ATP synthase. Cytochrome c oxidase is the component of the respiratory chain that catalyzes the reduction of oxygen to water. Electrons originating from reduced cytochrome c in the intermembrane space (IMS) are transferred via the dinuclear copper A center (CU(A)) of subunit 2 and heme A of subunit 1 to the active site in subunit 1, a binuclear center (BNC) formed by heme A3 and copper B (CU(B)). The BNC reduces molecular oxygen to 2 water molecules using 4 electrons from cytochrome c in the IMS and 4 protons from the mitochondrial matrix. The sequence is that of Cytochrome c oxidase subunit 6C (COX6C) from Saimiri sciureus (Common squirrel monkey).